We begin with the raw amino-acid sequence, 202 residues long: Pyrrolidone-carboxylate peptidase (202 aa).

Catalysis depends on residues Glu78, Cys141, and His165.

Belongs to the peptidase C15 family. As to quaternary structure, homotetramer.

The protein localises to the cytoplasm. The catalysed reaction is Release of an N-terminal pyroglutamyl group from a polypeptide, the second amino acid generally not being Pro.. In terms of biological role, removes 5-oxoproline from various penultimate amino acid residues except L-proline. In Thermosipho melanesiensis (strain DSM 12029 / CIP 104789 / BI429), this protein is Pyrrolidone-carboxylate peptidase.